A 100-amino-acid chain; its full sequence is MKISEEEVRHVANLSKLKFSDDETTEFATTLTKIVDMVELLNEVDTQGVPFTSNVADNINYMREDVSVAGWDREQLFKNVPEHEDGLIKVPAIIDEGGDA.

This sequence belongs to the GatC family. As to quaternary structure, heterotrimer of A, B and C subunits.

It catalyses the reaction L-glutamyl-tRNA(Gln) + L-glutamine + ATP + H2O = L-glutaminyl-tRNA(Gln) + L-glutamate + ADP + phosphate + H(+). The catalysed reaction is L-aspartyl-tRNA(Asn) + L-glutamine + ATP + H2O = L-asparaginyl-tRNA(Asn) + L-glutamate + ADP + phosphate + 2 H(+). Functionally, allows the formation of correctly charged Asn-tRNA(Asn) or Gln-tRNA(Gln) through the transamidation of misacylated Asp-tRNA(Asn) or Glu-tRNA(Gln) in organisms which lack either or both of asparaginyl-tRNA or glutaminyl-tRNA synthetases. The reaction takes place in the presence of glutamine and ATP through an activated phospho-Asp-tRNA(Asn) or phospho-Glu-tRNA(Gln). The protein is Aspartyl/glutamyl-tRNA(Asn/Gln) amidotransferase subunit C of Streptococcus mutans serotype c (strain ATCC 700610 / UA159).